A 175-amino-acid polypeptide reads, in one-letter code: Transcriptional regulator GadE (175 aa).

Residues 109–174 (HKNSQLCFSH…DIVTLGITSY (66 aa)) form the HTH luxR-type domain. Residues 133–152 (ESNITSTLNISQQTLKIQKF) constitute a DNA-binding region (H-T-H motif).

Its function is as follows. Regulates the expression of several genes involved in acid resistance. Required for the expression of gadA and gadBC, among others, regardless of media or growth conditions. Binds directly to the 20 bp GAD box found in the control regions of both loci. Could be involved in the regulation of the genes coding for the type III secretion system in enterohaemorragic strains. This is Transcriptional regulator GadE (gadE) from Escherichia coli O157:H7.